Reading from the N-terminus, the 132-residue chain is Transmembrane protein 170B (132 aa).

Residues 1-37 (MRAEGADHSMINLSVQQVLSLWAHGTVLRNLTEMWYW) lie on the Extracellular side of the membrane. N12 is a glycosylation site (N-linked (GlcNAc...) asparagine). A helical transmembrane segment spans residues 38–58 (IFLWALFSSLFVHGAAGVLMF). Residues 59–68 (VMLQRHRQGR) lie on the Cytoplasmic side of the membrane. A helical membrane pass occupies residues 69–89 (VLSIIAVSIGFLASVTGAMIT). At 90–104 (SAAVAGIYRVAGKNM) the chain is on the extracellular side. Residues 105-125 (APLEALVWGVGQTVLTLIISF) traverse the membrane as a helical segment. Topologically, residues 126–132 (SRILATL) are cytoplasmic.

Belongs to the TMEM170 family. Interacts with CTNNB1.

Its subcellular location is the cell membrane. The polypeptide is Transmembrane protein 170B (Tmem170b) (Rattus norvegicus (Rat)).